A 143-amino-acid polypeptide reads, in one-letter code: Nucleoside diphosphate kinase (143 aa).

ATP contacts are provided by Lys-11, Phe-59, Arg-87, Thr-93, Arg-104, and Asn-114. The Pros-phosphohistidine intermediate role is filled by His-117.

The protein belongs to the NDK family. Homotetramer. Requires Mg(2+) as cofactor.

Its subcellular location is the cytoplasm. It catalyses the reaction a 2'-deoxyribonucleoside 5'-diphosphate + ATP = a 2'-deoxyribonucleoside 5'-triphosphate + ADP. The catalysed reaction is a ribonucleoside 5'-diphosphate + ATP = a ribonucleoside 5'-triphosphate + ADP. Its function is as follows. Major role in the synthesis of nucleoside triphosphates other than ATP. The ATP gamma phosphate is transferred to the NDP beta phosphate via a ping-pong mechanism, using a phosphorylated active-site intermediate. The chain is Nucleoside diphosphate kinase from Citrobacter koseri (strain ATCC BAA-895 / CDC 4225-83 / SGSC4696).